The chain runs to 377 residues: Exopolygalacturonase (377 aa).

The N-terminal stretch at 1-5 is a signal peptide; it reads RGVQS. PbH1 repeat units lie at residues 159-184, 186-207, 209-229, 239-260, and 269-290; these read CEDITFQHVTVTAPGTSINTDGIHVG, SKGVTITNTKIATGDDCISIGP, SQNVTITQVNCGPGHGISIGS, VRGITVKGCTFSGTMNGVRVKT, and ATDLTFQDLTMNNVQNPVILDQ. The active-site Proton donor is D200. N211 is a glycosylation site (N-linked (GlcNAc...) asparagine). The active site involves H223. N-linked (GlcNAc...) asparagine glycosylation is present at N345.

It belongs to the glycosyl hydrolase 28 family. In terms of assembly, monomer. Post-translationally, glycosylated. As to expression, expressed in pollen (at protein level). Expressed in stem, but not in leaves (at protein level).

It is found in the secreted. The protein resides in the cell wall. It localises to the golgi apparatus. The protein localises to the endoplasmic reticulum. Its subcellular location is the vesicle. It carries out the reaction [(1-&gt;4)-alpha-D-galacturonosyl](n) + H2O = alpha-D-galacturonate + [(1-&gt;4)-alpha-D-galacturonosyl](n-1). In terms of biological role, may function in depolymerizing pectin during pollen development, germination, and tube growth. Acts as an exo-polygalacturonase. The protein is Exopolygalacturonase of Platanus acerifolia (London plane tree).